The chain runs to 626 residues: Chaperone protein HtpG (626 aa).

Residues 1 to 331 (MSETVERHEF…TDDLPLNVSR (331 aa)) are a; substrate-binding. Residues 332–544 (EMLQSTPTLQ…GMGPDLQMQR (213 aa)) are b. Residues 545–626 (LLRRAGRGFG…GTAAKPAESA (82 aa)) form a c region.

The protein belongs to the heat shock protein 90 family. Homodimer.

It is found in the cytoplasm. Molecular chaperone. Has ATPase activity. The polypeptide is Chaperone protein HtpG (Methylorubrum extorquens (strain PA1) (Methylobacterium extorquens)).